A 428-amino-acid polypeptide reads, in one-letter code: MGNCHTVGPNEALVVSGGCCGSDYKQYVFGGWAWAWWCISDTQRISLEIMTLQPRCEDVETAEGVALTVTGVAQVKIMTEKELLAVACEQFLGKNVQDIKNVVLQTLEGHLRSILGTLTVEQIYQDRDQFAKLVREVAAPDVGRMGIEILSFTIKDVYDKVDYLSSLGKTQTAVVQRDADIGVAEAERDAGIREAECKKEMLDVKFMADTKIADSKRAFELQKSAFSEEVNIKTAEAQLAYELQGAREQQKIRQEEIEIEVVQRKKQIAVEAQEILRTDKELIATVRRPAEAEAHRIQQIAEGEKVKQVLLAQAEAEKIRKIGEAEAAVIEAMGKAEAERMKLKAEAYQKYGDAAKMALVLEALPQIAAKISAPLTKVDEIVVLSGDNSKVTSEVNRLLAELPASVHALTGVDLSKIPLIKNATGAQV.

Residue Gly-2 is the site of N-myristoyl glycine attachment. The S-palmitoyl cysteine; by ZDHHC5 moiety is linked to residue Cys-4. Cys-19 carries the S-palmitoyl cysteine lipid modification. Cys-20 carries the S-palmitoyl cysteine; by ZDHHC5 lipid modification. Ser-405 carries the phosphoserine modification.

This sequence belongs to the band 7/mec-2 family. Flotillin subfamily. As to quaternary structure, heterooligomeric complex of flotillin-1 and flotillin-2 and caveolin-1 and caveolin-2. Interacts with ECPAS. ZDHHC5-catalyzed palmitoylation may be required for the formation of higher-order complexes and for neurite outgrowth in cultured neural stem cells. Expressed in many tissues, including suprabasal epidermis, hair follicles, heart, lung, thymus, spleen, liver, kidney and brain. Not expressed in skeletal muscle.

It is found in the cell membrane. The protein resides in the membrane. The protein localises to the caveola. It localises to the endosome. Functionally, may act as a scaffolding protein within caveolar membranes, functionally participating in formation of caveolae or caveolae-like vesicles. May be involved in epidermal cell adhesion and epidermal structure and function. The sequence is that of Flotillin-2 (Flot2) from Mus musculus (Mouse).